The sequence spans 661 residues: Sperm transmembrane protein 9 (661 aa).

Positions 1 to 16 are cleaved as a signal peptide; that stretch reads MNVILVLVVLFFAGDC. Over 17–618 the chain is Extracellular; sequence AKIRKIIDFL…MTNRLMKNYE (602 aa). The EGF-like 1 domain occupies 52 to 90; that stretch reads NFNPCLENPKICSNRGKCLHENGNFYCICPVTHYGKTCE. Disulfide bonds link Cys-56–Cys-69, Cys-63–Cys-78, and Cys-80–Cys-89. Residues Asn-105, Asn-106, Asn-134, and Asn-190 are each glycosylated (N-linked (GlcNAc...) asparagine). The 50-residue stretch at 210 to 259 folds into the EGF-like 2 domain; sequence QISACFDTQCDNGGICEDVVDWKTKTVTATCKCPSAIELIGGTVTGENCE. 3 disulfide bridges follow: Cys-214–Cys-225, Cys-219–Cys-240, and Cys-242–Cys-258. N-linked (GlcNAc...) asparagine glycans are attached at residues Asn-279, Asn-290, Asn-316, and Asn-338. A Cell attachment site motif is present at residues 377–379; that stretch reads RGD. EGF-like domains follow at residues 377–414, 519–557, and 559–600; these read RGDR…EKCE, HTNP…SLCE, and VDDS…LDCN. Intrachain disulfides connect Cys-385–Cys-402, Cys-393–Cys-404, Cys-413–Cys-419, Cys-523–Cys-534, Cys-528–Cys-545, Cys-547–Cys-556, Cys-563–Cys-576, Cys-571–Cys-588, and Cys-590–Cys-599. Residue Asn-549 is glycosylated (N-linked (GlcNAc...) asparagine). The chain crosses the membrane as a helical span at residues 619–639; it reads FSLPLVACFVSLAILLPVIVI. Over 640-661 the chain is Cytoplasmic; the sequence is SRRRQGRVEEAKKTSEVKTENP.

In terms of tissue distribution, expressed in spermatids, during spermogenesis expression is primarily localized to the pseudopod.

The protein resides in the cytoplasm. It is found in the membrane. Its function is as follows. Required for fertilization. May be required for cell adhesion and/or function as a signaling molecule. The chain is Sperm transmembrane protein 9 (spe-9) from Caenorhabditis elegans.